The primary structure comprises 1065 residues: Probable arabinosyltransferase B (1065 aa).

The next 12 membrane-spanning stretches (helical) occupy residues 15 to 37 (WVAT…LPVV), 204 to 226 (LKLA…LWRL), 241 to 263 (NWRT…HVIG), 394 to 413 (YSRL…TLGV), 417 to 436 (GLIA…RILV), 441 to 463 (VVGT…TVVF), 510 to 527 (FGFL…FIML), 540 to 557 (AWRL…LMFT), 567 to 589 (LFAA…AVLG), 596 to 618 (AFLA…WWYV), 633 to 655 (GGIT…AIWL), and 667 to 689 (LARA…VFIA).

It belongs to the emb family.

Its subcellular location is the cell membrane. Arabinosyl transferase responsible for the polymerization of arabinose into the arabinan of arabinogalactan. This Mycobacterium avium protein is Probable arabinosyltransferase B (embB).